The chain runs to 459 residues: UDP-N-acetylglucosamine 1-carboxyvinyltransferase (459 aa).

40–41 (KN) contacts phosphoenolpyruvate. Arg111 serves as a coordination point for UDP-N-acetyl-alpha-D-glucosamine. Cys135 acts as the Proton donor in catalysis. Residue Cys135 is modified to 2-(S-cysteinyl)pyruvic acid O-phosphothioketal. UDP-N-acetyl-alpha-D-glucosamine is bound by residues 140 to 144 (RPVDL), Asp324, and Val346. The interval 437 to 459 (PSAPPSEVSSAVAAGPDAAAAPV) is disordered. The span at 441 to 459 (PSEVSSAVAAGPDAAAAPV) shows a compositional bias: low complexity.

Belongs to the EPSP synthase family. MurA subfamily.

It is found in the cytoplasm. It catalyses the reaction phosphoenolpyruvate + UDP-N-acetyl-alpha-D-glucosamine = UDP-N-acetyl-3-O-(1-carboxyvinyl)-alpha-D-glucosamine + phosphate. Its pathway is cell wall biogenesis; peptidoglycan biosynthesis. Functionally, cell wall formation. Adds enolpyruvyl to UDP-N-acetylglucosamine. This chain is UDP-N-acetylglucosamine 1-carboxyvinyltransferase, found in Gloeobacter violaceus (strain ATCC 29082 / PCC 7421).